A 285-amino-acid polypeptide reads, in one-letter code: uncharacterized protein (285 aa).

The next 6 membrane-spanning stretches (helical) occupy residues 7–29 (FYRL…LTLQ), 49–71 (LVVW…STFF), 95–117 (IFLY…SNTL), 137–156 (FFSE…VLHA), 232–254 (KVVN…TVAL), and 259–281 (GGLS…IFVV).

It is found in the cell membrane. This is an uncharacterized protein from Aquifex aeolicus (strain VF5).